Reading from the N-terminus, the 205-residue chain is Iron-sulfur assembly protein 2 (205 aa).

3 residues coordinate Fe cation: C131, C196, and C198.

The protein belongs to the HesB/IscA family.

It is found in the mitochondrion matrix. In terms of biological role, involved in the assembly of mitochondrial and cytoplasmic iron-sulfur proteins. Probably involved in the binding of an intermediate of Fe/S cluster assembly. The polypeptide is Iron-sulfur assembly protein 2 (isa2) (Schizosaccharomyces pombe (strain 972 / ATCC 24843) (Fission yeast)).